A 321-amino-acid chain; its full sequence is Ribosomal RNA small subunit methyltransferase H (321 aa).

S-adenosyl-L-methionine contacts are provided by residues 40–42, Asp-60, Phe-84, Asp-106, and Gln-113; that span reads GGH.

This sequence belongs to the methyltransferase superfamily. RsmH family.

It localises to the cytoplasm. The enzyme catalyses cytidine(1402) in 16S rRNA + S-adenosyl-L-methionine = N(4)-methylcytidine(1402) in 16S rRNA + S-adenosyl-L-homocysteine + H(+). Functionally, specifically methylates the N4 position of cytidine in position 1402 (C1402) of 16S rRNA. The protein is Ribosomal RNA small subunit methyltransferase H of Pasteurella multocida (strain Pm70).